The primary structure comprises 410 residues: DAVTVASHVRKDLDTLTAGEIESLRSAFLDIQQDHTYENIASFHGKPGLCQHEGHKVACCVHGMPTFPSWHRLYVEQVEEALLDHGSSVAVPYFDWISPIQKLPDLISKATYYNSREQRFDPNPFFSGKVAGEDAVTTRDPQPELFNNNYFYEQALYALEQDNFCDFEIQFEVLHNALHSWLGGHAKYSFSSLDYTAFDPVFFLHHANTDRLWAIWQELQRYRGLPYNEADCAINLMRKPLQPFQDKKLNPRNITNIYSRPADTFDYRNHFHYEYDTLELNHQTVPQLENLLKRRQEYGRVFAGFLIHNNGLSADVTVYVCVPSGPKGKNDCNHKAGVFSVLGGELEMPFTFDRLYKLQITDTIKQLGLKVNNAASYQLKVEIKAVPGTLLDPHILPDPSIIFEPGTKER.

The Cu cation site is built by H44 and H55. A disulfide bond links C50 and C59. The 2'-(S-cysteinyl)-histidine (Cys-His) cross-link spans 60-62 (CVH). H71, H175, H179, and H206 together coordinate Cu cation. C165 and C232 are joined by a disulfide. An N-linked (GlcNAc...) asparagine glycan is attached at N253. A disulfide bridge links C321 with C332.

The protein belongs to the tyrosinase family. Hemocyanin subfamily. In terms of assembly, decamers of large identical subunits (450 kDa), each containing 8 globular oxygen-binding functional units. Cu(2+) is required as a cofactor.

Functionally, hemocyanins are copper-containing oxygen carriers occurring freely dissolved in the hemolymph of many mollusks and arthropods. The sequence is that of Hemocyanin, beta-C chain unit D from Helix pomatia (Roman snail).